Reading from the N-terminus, the 1547-residue chain is Transposon Ty3-G Gag-Pol polyprotein (1547 aa).

N-acetylserine is present on Ser2. Residues 265-282 (RLCFYCKKEGHRLNECRA) form a CCHC-type zinc finger. Catalysis depends on Asp336, which acts as the For protease activity; shared with dimeric partner. A Reverse transcriptase domain is found at 620-797 (LDNKFIVPSK…EETEFLGYSI (178 aa)). The Mg(2+) site is built by Asp686, Asp748, Asp749, Asp893, Glu936, and Asp961. The region spanning 893–1011 (DASKDGIGAV…VADAISRAVY (119 aa)) is the RNase H Ty3/gyspy-type domain. The tract at residues 1106-1145 (HTLFGGHFGVTVTLAKISPIYYWPKLQHSIIQYIRTCVQC) is integrase-type zinc finger-like. The Integrase catalytic domain maps to 1159 to 1324 (LQPLPIAEGR…SPFEIDLGYL (166 aa)). Asp1175 and Asp1236 together coordinate Mg(2+).

The protease is a homodimer, whose active site consists of two apposed aspartic acid residues. Post-translationally, initially, virus-like particles (VLPs) are composed of the structural unprocessed proteins Gag and Gag-Pol, and also contain the host initiator methionine tRNA (tRNA(i)-Met) which serves as a primer for minus-strand DNA synthesis, and a dimer of genomic Ty RNA. Processing of the polyproteins occurs within the particle and proceeds by an ordered pathway, called maturation. First, the protease (PR) is released by autocatalytic cleavage of the Gag-Pol polyprotein, and this cleavage is a prerequisite for subsequent processing at the remaining sites to release the mature structural and catalytic proteins. Maturation takes place prior to the RT reaction and is required to produce transposition-competent VLPs.

The protein resides in the cytoplasm. Its subcellular location is the nucleus. The enzyme catalyses DNA(n) + a 2'-deoxyribonucleoside 5'-triphosphate = DNA(n+1) + diphosphate. The catalysed reaction is Endonucleolytic cleavage to 5'-phosphomonoester.. Its function is as follows. Capsid protein (CA) is the structural component of the virus-like particle (VLP), forming the shell that encapsulates the genomic RNA-nucleocapsid complex. Functionally, nucleocapsid protein p11 (NC) forms the nucleocore that coats the retro-elements dimeric RNA. Binds these RNAs through its zinc fingers. Promotes primer tRNA(i)-Met annealing to the multipartite primer-binding site (PBS), dimerization of Ty3 RNA and initiation of reverse transcription. The aspartyl protease (PR) mediates the proteolytic cleavages of the Gag and Gag-Pol polyproteins after assembly of the VLP. In terms of biological role, reverse transcriptase/ribonuclease H (RT) is a multifunctional enzyme that catalyzes the conversion of the retro-elements RNA genome into dsDNA within the VLP. The enzyme displays a DNA polymerase activity that can copy either DNA or RNA templates, and a ribonuclease H (RNase H) activity that cleaves the RNA strand of RNA-DNA heteroduplexes during plus-strand synthesis and hydrolyzes RNA primers. The conversion leads to a linear dsDNA copy of the retrotransposon that includes long terminal repeats (LTRs) at both ends. Its function is as follows. Integrase (IN) targets the VLP to the nucleus, where a subparticle preintegration complex (PIC) containing at least integrase and the newly synthesized dsDNA copy of the retrotransposon must transit the nuclear membrane. Once in the nucleus, integrase performs the integration of the dsDNA into the host genome. The chain is Transposon Ty3-G Gag-Pol polyprotein (TY3B-G) from Saccharomyces cerevisiae (strain ATCC 204508 / S288c) (Baker's yeast).